The sequence spans 170 residues: Bacilliredoxin SRU_1493 (170 aa).

The interval 140–170 (CGDEEPPADAPSRPDPSSSGEGLPSTFQSIT) is disordered.

The protein belongs to the bacilliredoxin family.

This Salinibacter ruber (strain DSM 13855 / M31) protein is Bacilliredoxin SRU_1493.